Here is a 110-residue protein sequence, read N- to C-terminus: METIAKHRYARTSAQKARLVADLIRGKKVSAALEILTFTNKKAAALVKKVLESAIANAEHNDGADVDDLKVAKIFVDEGPSMKRVMPRAKGRADRILKRTSHITVVVSDR.

The protein belongs to the universal ribosomal protein uL22 family. As to quaternary structure, part of the 50S ribosomal subunit.

Its function is as follows. This protein binds specifically to 23S rRNA; its binding is stimulated by other ribosomal proteins, e.g. L4, L17, and L20. It is important during the early stages of 50S assembly. It makes multiple contacts with different domains of the 23S rRNA in the assembled 50S subunit and ribosome. Functionally, the globular domain of the protein is located near the polypeptide exit tunnel on the outside of the subunit, while an extended beta-hairpin is found that lines the wall of the exit tunnel in the center of the 70S ribosome. The polypeptide is Large ribosomal subunit protein uL22 (Glaesserella parasuis serovar 5 (strain SH0165) (Haemophilus parasuis)).